A 283-amino-acid polypeptide reads, in one-letter code: Non-selective voltage-gated ion channel VDAC1 (283 aa).

The residue at position 2 (A2) is an N-acetylalanine. K12 lines the ATP pocket. K12 participates in a covalent cross-link: Glycyl lysine isopeptide (Lys-Gly) (interchain with G-Cter in ubiquitin). S13 is subject to Phosphoserine. A Phosphothreonine modification is found at T19. K20 provides a ligand contact to ATP. The residue at position 20 (K20) is an N6-acetyllysine; alternate. An N6-succinyllysine; alternate modification is found at K20. Residue K20 forms a Glycyl lysine isopeptide (Lys-Gly) (interchain with G-Cter in ubiquitin); alternate linkage. 2 beta stranded membrane-spanning segments follow: residues 26-35 and 39-47; these read LIKLDLKTKS and LEFTSSGSA. Residues K53 and K61 each participate in a glycyl lysine isopeptide (Lys-Gly) (interchain with G-Cter in ubiquitin) cross-link. The beta stranded transmembrane segment at 54–64 threads the bilayer; sequence VTGSLETKYRW. Position 67 is a phosphotyrosine (Y67). Beta stranded transmembrane passes span 69–76, 80–89, and 95–104; these read LTFTEKWN, TLGTEITVED, and LKLTFDSSFS. Phosphothreonine is present on T107. K109 is subject to N6-acetyllysine; alternate. A Glycyl lysine isopeptide (Lys-Gly) (interchain with G-Cter in ubiquitin); alternate cross-link involves residue K109. Residue K110 forms a Glycyl lysine isopeptide (Lys-Gly) (interchain with G-Cter in ubiquitin) linkage. 4 beta stranded membrane-spanning segments follow: residues 111 to 120, 123 to 130, 137 to 145, and 150 to 158; these read NAKIKTGYKR, INLGCDVD, SIRGALVLG, and LAGYQMNFE. Residue K161 forms a Glycyl lysine isopeptide (Lys-Gly) (interchain with G-Cter in ubiquitin) linkage. The next 6 beta stranded transmembrane spans lie at 163–175, 178–185, 189–198, 202–211, 218–227, and 231–238; these read RVTQ…GYKT, FQLHTNVN, EFGGSIYQKV, LETAVNLAWT, RFGIAAKYQI, and ACFSAKVN. The residue at position 193 (S193) is a Phosphoserine; by NEK1. At S240 the chain carries Phosphoserine. Residue 242–244 coordinates NAD(+); the sequence is LIG. A beta stranded membrane pass occupies residues 242–251; it reads LIGLGYTQTL. K252 bears the N6-acetyllysine mark. Residues 254–263 traverse the membrane as a beta stranded segment; that stretch reads GIKLTLSALL. Residue 260 to 264 participates in NAD(+) binding; that stretch reads SALLD. K266 carries the post-translational modification N6-acetyllysine; alternate. K266 participates in a covalent cross-link: Glycyl lysine isopeptide (Lys-Gly) (interchain with G-Cter in ubiquitin); alternate. A beta stranded transmembrane segment spans residues 273-282; that stretch reads HKLGLGLEFQ. A Glycyl lysine isopeptide (Lys-Gly) (interchain with G-Cter in ubiquitin) cross-link involves residue K274.

The protein belongs to the eukaryotic mitochondrial porin family. In terms of assembly, homodimer and homotrimer; in response to cyclic AMP or calcium; oligomerization is required for scramblase activity. Component of the mitochondrial permeability transition pore complex (mPTPC), at least composed of SPG7, VDAC1 and PPIF. Interacts with SPG7, NIPSNAP2 and SLC25A30. Interacts with hexokinases including HK1. The HK1-VDAC1 complex interacts with ATF2. Interacts with BCL2L1. Interacts with BAK1. Interacts with RTL10/BOP (via BH3 domain). Interacts with amyloid-beta and APP; induces VDAC1 dephosphorylation. Interacts with TMEM41B. Interacts with BCAP31. Interacts with HSPA9; this interaction couples ITPR1 to VDAC1. Phosphorylation at Ser-193 by NEK1 promotes the closed conformational state preventing excessive mitochondrial membrane permeability and subsequent apoptotic cell death after injury. Phosphorylation by the AKT-GSK3B axis stabilizes the protein probably by preventing ubiquitin-mediated proteasomal degradation. Post-translationally, ubiquitinated. Undergoes monoubiquitination and polyubiquitination by PRKN; monoubiquitination at Lys-274 inhibits apoptosis, whereas polyubiquitination leads to its degradation and promotes mitophagy. Deubiquitinated by USP30. Predominantly in brain astrocytes.

The protein resides in the mitochondrion outer membrane. It is found in the cell membrane. The protein localises to the membrane raft. The catalysed reaction is chloride(in) = chloride(out). It catalyses the reaction K(+)(in) = K(+)(out). It carries out the reaction ATP(in) = ATP(out). The enzyme catalyses Ca(2+)(in) = Ca(2+)(out). The catalysed reaction is Na(+)(in) = Na(+)(out). It catalyses the reaction Mg(2+)(in) = Mg(2+)(out). It carries out the reaction L-glutamate(out) = L-glutamate(in). The enzyme catalyses dopamine(out) = dopamine(in). The catalysed reaction is acetylcholine(in) = acetylcholine(out). It catalyses the reaction Fe(III)-[cytochrome c](out) = Fe(III)-[cytochrome c](in). It carries out the reaction a 1,2-diacyl-sn-glycero-3-phosphocholine(in) = a 1,2-diacyl-sn-glycero-3-phosphocholine(out). The enzyme catalyses a 1,2-diacyl-sn-glycero-3-phospho-L-serine(in) = a 1,2-diacyl-sn-glycero-3-phospho-L-serine(out). With respect to regulation, inhibited by nitric oxide. Functionally, non-selective voltage-gated ion channel that mediates the transport of anions and cations through the mitochondrion outer membrane and plasma membrane. The channel at the outer mitochondrial membrane allows diffusion of small hydrophilic molecules; in the plasma membrane it is involved in cell volume regulation and apoptosis. It adopts an open conformation at low or zero membrane potential and a closed conformation at potentials above 30-40 mV. The open state has a weak anion selectivity whereas the closed state is cation-selective. Binds various signaling molecules, including the sphingolipid ceramide, the phospholipid phosphatidylcholine, and the sterols cholesterol and oxysterol. In depolarized mitochondria, acts downstream of PRKN and PINK1 to promote mitophagy or prevent apoptosis; polyubiquitination by PRKN promotes mitophagy, while monoubiquitination by PRKN decreases mitochondrial calcium influx which ultimately inhibits apoptosis. May participate in the formation of the permeability transition pore complex (PTPC) responsible for the release of mitochondrial products that triggers apoptosis. May mediate ATP export from cells. Part of a complex composed of HSPA9, ITPR1 and VDAC1 that regulates mitochondrial calcium-dependent apoptosis by facilitating calcium transport from the ER lumen to the mitochondria intermembrane space thus providing calcium for the downstream calcium channel MCU that directly releases it into mitochondria matrix. Mediates cytochrome c efflux. Its function is as follows. Catalyzes the scrambling of phospholipids across the outer mitochondrial membrane; the mechanism is unrelated to channel activity and is capable of translocating both anionic and zwitterionic phospholipids. This is Non-selective voltage-gated ion channel VDAC1 from Bos taurus (Bovine).